The primary structure comprises 942 residues: Cilia- and flagella-associated protein 69 (942 aa).

Residues 1-16 (MSTAEASATTADAAEA) are compositionally biased toward low complexity. The tract at residues 1–25 (MSTAEASATTADAAEAGGRTKTGSP) is disordered.

As to expression, expressed in ciliated olfactory sensory neurons (at protein level). Expressed in testis, specifically in sperm (at protein level).

It is found in the cell projection. It localises to the cilium. Its subcellular location is the flagellum. Its function is as follows. Cilium- and flagellum-associated protein. In the olfactory epithelium, regulates the speed of activation and termination of the odor response and thus contributes to the robustness of olfactory transduction pathways. Required for sperm flagellum assembly and stability. In Mus musculus (Mouse), this protein is Cilia- and flagella-associated protein 69.